Here is a 102-residue protein sequence, read N- to C-terminus: Large ribosomal subunit protein bL21 (102 aa).

Belongs to the bacterial ribosomal protein bL21 family. As to quaternary structure, part of the 50S ribosomal subunit. Contacts protein L20.

Functionally, this protein binds to 23S rRNA in the presence of protein L20. This Levilactobacillus brevis (strain ATCC 367 / BCRC 12310 / CIP 105137 / JCM 1170 / LMG 11437 / NCIMB 947 / NCTC 947) (Lactobacillus brevis) protein is Large ribosomal subunit protein bL21.